Consider the following 910-residue polypeptide: DNA mismatch repair protein MutS (910 aa).

A compositionally biased stretch (basic and acidic residues) spans 1 to 11 (MEAKVEEKEPE). The segment at 1–21 (MEAKVEEKEPEPVENAGPDAP) is disordered. 658 to 665 (GPNMGGKS) lines the ATP pocket.

It belongs to the DNA mismatch repair MutS family.

Functionally, this protein is involved in the repair of mismatches in DNA. It is possible that it carries out the mismatch recognition step. This protein has a weak ATPase activity. The sequence is that of DNA mismatch repair protein MutS from Brucella melitensis biotype 1 (strain ATCC 23456 / CCUG 17765 / NCTC 10094 / 16M).